A 173-amino-acid chain; its full sequence is Translation initiation factor IF-3 (173 aa).

It belongs to the IF-3 family. As to quaternary structure, monomer.

It localises to the cytoplasm. In terms of biological role, IF-3 binds to the 30S ribosomal subunit and shifts the equilibrium between 70S ribosomes and their 50S and 30S subunits in favor of the free subunits, thus enhancing the availability of 30S subunits on which protein synthesis initiation begins. The protein is Translation initiation factor IF-3 of Aromatoleum aromaticum (strain DSM 19018 / LMG 30748 / EbN1) (Azoarcus sp. (strain EbN1)).